We begin with the raw amino-acid sequence, 122 residues long: uncharacterized protein (122 aa).

2 helical membrane passes run 36 to 56 (SVRS…YSQF) and 72 to 92 (AVFL…FSTD).

It localises to the membrane. This is an uncharacterized protein from Saccharomyces cerevisiae (strain ATCC 204508 / S288c) (Baker's yeast).